The following is a 307-amino-acid chain: Oxygen-dependent coproporphyrinogen-III oxidase (307 aa).

Ser99 is a substrate binding site. Residues His103 and His113 each contribute to the a divalent metal cation site. His113 serves as the catalytic Proton donor. 115–117 (NVR) is a binding site for substrate. His152 and His182 together coordinate a divalent metal cation. Positions 247–282 (YVEFNLVFDRGTLFGLQSGGRTESILMSMPPVANWR) are important for dimerization. Residue 265 to 267 (GGR) participates in substrate binding.

The protein belongs to the aerobic coproporphyrinogen-III oxidase family. As to quaternary structure, homodimer. The cofactor is a divalent metal cation.

The protein localises to the cytoplasm. The enzyme catalyses coproporphyrinogen III + O2 + 2 H(+) = protoporphyrinogen IX + 2 CO2 + 2 H2O. It participates in porphyrin-containing compound metabolism; protoporphyrin-IX biosynthesis; protoporphyrinogen-IX from coproporphyrinogen-III (O2 route): step 1/1. Involved in the heme biosynthesis. Catalyzes the aerobic oxidative decarboxylation of propionate groups of rings A and B of coproporphyrinogen-III to yield the vinyl groups in protoporphyrinogen-IX. This chain is Oxygen-dependent coproporphyrinogen-III oxidase, found in Burkholderia lata (strain ATCC 17760 / DSM 23089 / LMG 22485 / NCIMB 9086 / R18194 / 383).